A 43-amino-acid chain; its full sequence is Defensin-B (43 aa).

3 disulfide bridges follow: Cys3–Cys34, Cys20–Cys39, and Cys24–Cys41.

The protein localises to the secreted. Its function is as follows. Antibacterial protein. Strong activity against the Gram-positive bacteria M.luteus, B.megaterium and S.aureus. Reduced activity against Gram-positive bacterium B.subtilis and weak activity against Gram-negative bacterium X.japonicus. No detectable activity against the Gram-negative bacteria E.asbriae, E.coli, P.aeruginosa and S.marcescens. The sequence is that of Defensin-B from Anomala cuprea (Cupreous chafer beetle).